A 163-amino-acid polypeptide reads, in one-letter code: Mating-type protein ALPHA2 (163 aa).

The segment at residues 80 to 142 (IEKRSKRFPK…NRRRKERTLT (63 aa)) is a DNA-binding region (homeobox; TALE-type).

The protein belongs to the TALE/M-ATYP homeobox family.

Its subcellular location is the nucleus. Its function is as follows. Mating type proteins are sequence specific DNA-binding proteins that act as master switches in yeast differentiation by controlling gene expression in a cell type-specific fashion. This is Mating-type protein ALPHA2 (MATALPHA2) from Pichia angusta (Yeast).